The following is a 90-amino-acid chain: DNA-directed RNA polymerase subunit omega (90 aa).

The interval 69-90 (RQEQQEQDAAELAAVSSITHNR) is disordered.

Belongs to the RNA polymerase subunit omega family. In terms of assembly, the RNAP catalytic core consists of 2 alpha, 1 beta, 1 beta' and 1 omega subunit. When a sigma factor is associated with the core the holoenzyme is formed, which can initiate transcription.

The catalysed reaction is RNA(n) + a ribonucleoside 5'-triphosphate = RNA(n+1) + diphosphate. Functionally, promotes RNA polymerase assembly. Latches the N- and C-terminal regions of the beta' subunit thereby facilitating its interaction with the beta and alpha subunits. This chain is DNA-directed RNA polymerase subunit omega, found in Aliivibrio fischeri (strain ATCC 700601 / ES114) (Vibrio fischeri).